A 54-amino-acid chain; its full sequence is Preprotein translocase subunit SecG (54 aa).

Residues 1–30 (MSKNKQDAGLSTSAGLVRYMDEDASKIKIA) lie on the Cytoplasmic side of the membrane. The helical transmembrane segment at 31–52 (PEKVLGITISIMVLLFILNYGL) threads the bilayer. Residues 53 to 54 (LA) lie on the Extracellular side of the membrane.

It belongs to the SEC61-beta family. As to quaternary structure, component of the protein translocase complex. Heterotrimer consisting of alpha (SecY), beta (SecG) and gamma (SecE) subunits. Can form oligomers of the heterotrimer.

The protein localises to the cell membrane. Functionally, involved in protein export. The function of the beta subunit is unknown, but it may be involved in stabilization of the trimeric complex. The chain is Preprotein translocase subunit SecG from Methanococcus aeolicus (strain ATCC BAA-1280 / DSM 17508 / OCM 812 / Nankai-3).